Consider the following 146-residue polypeptide: Anti-sigma F factor (146 aa).

This sequence belongs to the anti-sigma-factor family.

It carries out the reaction L-seryl-[protein] + ATP = O-phospho-L-seryl-[protein] + ADP + H(+). The enzyme catalyses L-threonyl-[protein] + ATP = O-phospho-L-threonyl-[protein] + ADP + H(+). Functionally, binds to sigma F and blocks its ability to form an RNA polymerase holoenzyme (E-sigma F). Phosphorylates SpoIIAA on a serine residue. This phosphorylation may enable SpoIIAA to act as an anti-anti-sigma factor that counteracts SpoIIAB and thus releases sigma F from inhibition. This Bacillus licheniformis (strain ATCC 14580 / DSM 13 / JCM 2505 / CCUG 7422 / NBRC 12200 / NCIMB 9375 / NCTC 10341 / NRRL NRS-1264 / Gibson 46) protein is Anti-sigma F factor.